Consider the following 156-residue polypeptide: Small ribosomal subunit protein bS16 (156 aa).

A compositionally biased stretch (basic and acidic residues) spans 85-120 (GESGAEGTLKSKSEKEAFVAPERDSVILPEEPKQEE). The tract at residues 85 to 156 (GESGAEGTLK…APAEDAEKSE (72 aa)) is disordered. The span at 132 to 150 (PAEEAAEAPAEEAAEAPAE) shows a compositional bias: acidic residues.

It belongs to the bacterial ribosomal protein bS16 family.

This chain is Small ribosomal subunit protein bS16, found in Micrococcus luteus (strain ATCC 4698 / DSM 20030 / JCM 1464 / CCM 169 / CCUG 5858 / IAM 1056 / NBRC 3333 / NCIMB 9278 / NCTC 2665 / VKM Ac-2230) (Micrococcus lysodeikticus).